The primary structure comprises 393 residues: NAD(P)H-quinone oxidoreductase subunit H, chloroplastic (393 aa).

It belongs to the complex I 49 kDa subunit family. In terms of assembly, NDH is composed of at least 16 different subunits, 5 of which are encoded in the nucleus.

The protein localises to the plastid. Its subcellular location is the chloroplast thylakoid membrane. It carries out the reaction a plastoquinone + NADH + (n+1) H(+)(in) = a plastoquinol + NAD(+) + n H(+)(out). The catalysed reaction is a plastoquinone + NADPH + (n+1) H(+)(in) = a plastoquinol + NADP(+) + n H(+)(out). NDH shuttles electrons from NAD(P)H:plastoquinone, via FMN and iron-sulfur (Fe-S) centers, to quinones in the photosynthetic chain and possibly in a chloroplast respiratory chain. The immediate electron acceptor for the enzyme in this species is believed to be plastoquinone. Couples the redox reaction to proton translocation, and thus conserves the redox energy in a proton gradient. The chain is NAD(P)H-quinone oxidoreductase subunit H, chloroplastic from Manihot esculenta (Cassava).